Reading from the N-terminus, the 320-residue chain is Malate dehydrogenase (320 aa).

NAD(+) is bound by residues glycine 10–glycine 15 and aspartate 34. Residues arginine 83 and arginine 89 each coordinate substrate. Residues asparagine 96 and isoleucine 119–asparagine 121 contribute to the NAD(+) site. Residues asparagine 121 and arginine 152 each contribute to the substrate site. Histidine 176 acts as the Proton acceptor in catalysis.

The protein belongs to the LDH/MDH superfamily. MDH type 3 family.

The catalysed reaction is (S)-malate + NAD(+) = oxaloacetate + NADH + H(+). Functionally, catalyzes the reversible oxidation of malate to oxaloacetate. In Novosphingobium aromaticivorans (strain ATCC 700278 / DSM 12444 / CCUG 56034 / CIP 105152 / NBRC 16084 / F199), this protein is Malate dehydrogenase.